The primary structure comprises 387 residues: Putative acid--amine ligase YjfC (387 aa).

Residue 101–103 (RMD) participates in ATP binding. Positions 103, 116, and 118 each coordinate Mg(2+). ATP contacts are provided by residues Lys-265, Lys-302, Gly-309, Gln-337, and 372–374 (LIT).

Belongs to the glutathionylspermidine synthase preATP-grasp family.

Its function is as follows. May be a ligase forming an amide bond. Shows ATPase activity. Despite its similarity to the C-terminal synthetase domain of Gss, is not a glutathionylspermidine (Gsp) synthetase. Cannot synthesize Gsp, glutathione (GSH), or GSH intermediates, from GSH and spermidine, cysteine and glutamate, gamma-glutamylcysteine and spermidine, and gamma-glutamylcysteine and glycine. Does not bind to Gsp. In Escherichia coli (strain K12), this protein is Putative acid--amine ligase YjfC (yjfC).